The following is a 306-amino-acid chain: Curved DNA-binding protein (306 aa).

Residues 5 to 69 (DYYAIMGVKP…QRRAEYDQMW (65 aa)) enclose the J domain.

It localises to the cytoplasm. The protein localises to the nucleoid. In terms of biological role, DNA-binding protein that preferentially recognizes a curved DNA sequence. It is probably a functional analog of DnaJ; displays overlapping activities with DnaJ, but functions under different conditions, probably acting as a molecular chaperone in an adaptive response to environmental stresses other than heat shock. Lacks autonomous chaperone activity; binds native substrates and targets them for recognition by DnaK. Its activity is inhibited by the binding of CbpM. The sequence is that of Curved DNA-binding protein from Shigella dysenteriae serotype 1 (strain Sd197).